A 222-amino-acid chain; its full sequence is Pyridoxine/pyridoxamine 5'-phosphate oxidase (222 aa).

Residues 69–74, 84–85, Lys91, and Gln113 contribute to the FMN site; these read RMVLLK and YT. Substrate is bound at residue Lys74. Substrate is bound by residues Tyr131, Arg135, and Ser139. FMN-binding positions include 148-149 and Trp193; that span reads QS. 199–201 provides a ligand contact to substrate; it reads RLH. Residue Arg203 coordinates FMN.

It belongs to the pyridoxamine 5'-phosphate oxidase family. In terms of assembly, homodimer. Requires FMN as cofactor.

The enzyme catalyses pyridoxamine 5'-phosphate + O2 + H2O = pyridoxal 5'-phosphate + H2O2 + NH4(+). The catalysed reaction is pyridoxine 5'-phosphate + O2 = pyridoxal 5'-phosphate + H2O2. The protein operates within cofactor metabolism; pyridoxal 5'-phosphate salvage; pyridoxal 5'-phosphate from pyridoxamine 5'-phosphate: step 1/1. Its pathway is cofactor metabolism; pyridoxal 5'-phosphate salvage; pyridoxal 5'-phosphate from pyridoxine 5'-phosphate: step 1/1. Catalyzes the oxidation of either pyridoxine 5'-phosphate (PNP) or pyridoxamine 5'-phosphate (PMP) into pyridoxal 5'-phosphate (PLP). This Maricaulis maris (strain MCS10) (Caulobacter maris) protein is Pyridoxine/pyridoxamine 5'-phosphate oxidase.